The chain runs to 531 residues: Cytosolic Fe-S cluster assembly factor NAR1 (531 aa).

C20, C72, C75, C78, C184, and C239 together coordinate [4Fe-4S] cluster. The interval 395–426 (TSSTTTTKTNPLVARRKARLSSKRSESGAQDV) is disordered. Residues C442 and C446 each contribute to the [4Fe-4S] cluster site.

It belongs to the NARF family.

In terms of biological role, component of the cytosolic Fe/S protein assembly machinery. Required for maturation of extramitochondrial Fe/S proteins. May play a role in the transfer of pre-assembled Fe/S clusters to target apoproteins. This chain is Cytosolic Fe-S cluster assembly factor NAR1 (NAR1), found in Meyerozyma guilliermondii (strain ATCC 6260 / CBS 566 / DSM 6381 / JCM 1539 / NBRC 10279 / NRRL Y-324) (Yeast).